Here is a 272-residue protein sequence, read N- to C-terminus: Probable proteasome subunit beta type-5 (272 aa).

A propeptide spans 1–61 (MNSIVSKYTQ…KHCLIKMNHG (61 aa)) (removed in mature form). T62 (nucleophile) is an active-site residue.

This sequence belongs to the peptidase T1B family. The 26S proteasome consists of a 20S proteasome core and two 19S regulatory subunits. The 20S proteasome core is composed of 28 subunits that are arranged in four stacked rings, resulting in a barrel-shaped structure. The two end rings are each formed by seven alpha subunits, and the two central rings are each formed by seven beta subunits. The catalytic chamber with the active sites is on the inside of the barrel.

The protein resides in the cytoplasm. It localises to the nucleus. It catalyses the reaction Cleavage of peptide bonds with very broad specificity.. Its function is as follows. The proteasome is a multicatalytic proteinase complex which is characterized by its ability to cleave peptides with Arg, Phe, Tyr, Leu, and Glu adjacent to the leaving group at neutral or slightly basic pH. The proteasome has an ATP-dependent proteolytic activity. This chain is Probable proteasome subunit beta type-5 (pts1), found in Schizosaccharomyces pombe (strain 972 / ATCC 24843) (Fission yeast).